Consider the following 259-residue polypeptide: 3-deoxy-manno-octulosonate cytidylyltransferase (259 aa).

Belongs to the KdsB family.

Its subcellular location is the cytoplasm. It carries out the reaction 3-deoxy-alpha-D-manno-oct-2-ulosonate + CTP = CMP-3-deoxy-beta-D-manno-octulosonate + diphosphate. The protein operates within nucleotide-sugar biosynthesis; CMP-3-deoxy-D-manno-octulosonate biosynthesis; CMP-3-deoxy-D-manno-octulosonate from 3-deoxy-D-manno-octulosonate and CTP: step 1/1. Its pathway is bacterial outer membrane biogenesis; lipopolysaccharide biosynthesis. Activates KDO (a required 8-carbon sugar) for incorporation into bacterial lipopolysaccharide in Gram-negative bacteria. In Aeromonas salmonicida (strain A449), this protein is 3-deoxy-manno-octulosonate cytidylyltransferase.